The chain runs to 622 residues: 1-deoxy-D-xylulose-5-phosphate synthase (622 aa).

Thiamine diphosphate-binding positions include His-80 and 121-123; that span reads GHS. Residue Asp-152 coordinates Mg(2+). Thiamine diphosphate-binding positions include 153 to 154, Asn-181, Tyr-288, and Glu-370; that span reads GA. Residue Asn-181 coordinates Mg(2+).

This sequence belongs to the transketolase family. DXPS subfamily. In terms of assembly, homodimer. It depends on Mg(2+) as a cofactor. Thiamine diphosphate serves as cofactor.

The catalysed reaction is D-glyceraldehyde 3-phosphate + pyruvate + H(+) = 1-deoxy-D-xylulose 5-phosphate + CO2. The protein operates within metabolic intermediate biosynthesis; 1-deoxy-D-xylulose 5-phosphate biosynthesis; 1-deoxy-D-xylulose 5-phosphate from D-glyceraldehyde 3-phosphate and pyruvate: step 1/1. Its function is as follows. Catalyzes the acyloin condensation reaction between C atoms 2 and 3 of pyruvate and glyceraldehyde 3-phosphate to yield 1-deoxy-D-xylulose-5-phosphate (DXP). In Hamiltonella defensa subsp. Acyrthosiphon pisum (strain 5AT), this protein is 1-deoxy-D-xylulose-5-phosphate synthase.